Here is a 190-residue protein sequence, read N- to C-terminus: Potassium-transporting ATPase KdpC subunit (190 aa).

The chain crosses the membrane as a helical span at residues T10–G30.

Belongs to the KdpC family. In terms of assembly, the system is composed of three essential subunits: KdpA, KdpB and KdpC.

It is found in the cell inner membrane. Functionally, part of the high-affinity ATP-driven potassium transport (or Kdp) system, which catalyzes the hydrolysis of ATP coupled with the electrogenic transport of potassium into the cytoplasm. This subunit acts as a catalytic chaperone that increases the ATP-binding affinity of the ATP-hydrolyzing subunit KdpB by the formation of a transient KdpB/KdpC/ATP ternary complex. The sequence is that of Potassium-transporting ATPase KdpC subunit from Escherichia coli O7:K1 (strain IAI39 / ExPEC).